The following is a 111-amino-acid chain: Ribonuclease P protein component (111 aa).

Belongs to the RnpA family. In terms of assembly, consists of a catalytic RNA component (M1 or rnpB) and a protein subunit.

It carries out the reaction Endonucleolytic cleavage of RNA, removing 5'-extranucleotides from tRNA precursor.. Its function is as follows. RNaseP catalyzes the removal of the 5'-leader sequence from pre-tRNA to produce the mature 5'-terminus. It can also cleave other RNA substrates such as 4.5S RNA. The protein component plays an auxiliary but essential role in vivo by binding to the 5'-leader sequence and broadening the substrate specificity of the ribozyme. The polypeptide is Ribonuclease P protein component (Streptococcus thermophilus (strain ATCC BAA-491 / LMD-9)).